Reading from the N-terminus, the 146-residue chain is UPF0735 ACT domain-containing protein Teth514_2312 (146 aa).

Positions 71 to 146 (TLSMVLDHMP…GVRKIEILGE (76 aa)) constitute an ACT domain.

It belongs to the UPF0735 family.

The sequence is that of UPF0735 ACT domain-containing protein Teth514_2312 from Thermoanaerobacter sp. (strain X514).